The primary structure comprises 369 residues: 3-dehydroquinate synthase (369 aa).

NAD(+) is bound by residues 75–80 (DGEEHK), 109–113 (GVIGD), 133–134 (TT), Lys146, Lys155, and 173–176 (TLKT). Positions 188, 251, and 268 each coordinate Zn(2+).

This sequence belongs to the sugar phosphate cyclases superfamily. Dehydroquinate synthase family. It depends on Co(2+) as a cofactor. Zn(2+) serves as cofactor. The cofactor is NAD(+).

It localises to the cytoplasm. It catalyses the reaction 7-phospho-2-dehydro-3-deoxy-D-arabino-heptonate = 3-dehydroquinate + phosphate. It participates in metabolic intermediate biosynthesis; chorismate biosynthesis; chorismate from D-erythrose 4-phosphate and phosphoenolpyruvate: step 2/7. In terms of biological role, catalyzes the conversion of 3-deoxy-D-arabino-heptulosonate 7-phosphate (DAHP) to dehydroquinate (DHQ). The sequence is that of 3-dehydroquinate synthase from Legionella pneumophila (strain Lens).